The chain runs to 338 residues: tRNA-cytidine(32) 2-sulfurtransferase (338 aa).

The short motif at 86–91 is the PP-loop motif element; that stretch reads SGGKDS. 3 residues coordinate [4Fe-4S] cluster: Cys-161, Cys-164, and Cys-252.

The protein belongs to the TtcA family. As to quaternary structure, homodimer. It depends on Mg(2+) as a cofactor. [4Fe-4S] cluster serves as cofactor.

The protein resides in the cytoplasm. It carries out the reaction cytidine(32) in tRNA + S-sulfanyl-L-cysteinyl-[cysteine desulfurase] + AH2 + ATP = 2-thiocytidine(32) in tRNA + L-cysteinyl-[cysteine desulfurase] + A + AMP + diphosphate + H(+). It participates in tRNA modification. Functionally, catalyzes the ATP-dependent 2-thiolation of cytidine in position 32 of tRNA, to form 2-thiocytidine (s(2)C32). The sulfur atoms are provided by the cysteine/cysteine desulfurase (IscS) system. The sequence is that of tRNA-cytidine(32) 2-sulfurtransferase from Albidiferax ferrireducens (strain ATCC BAA-621 / DSM 15236 / T118) (Rhodoferax ferrireducens).